The primary structure comprises 406 residues: 26S proteasome regulatory subunit 8 (406 aa).

Alanine 2 is subject to N-acetylalanine. A Phosphoserine modification is found at serine 120. Residues 186 to 406 (VLLYGPPGTG…KNMSIKKLWK (221 aa)) form a may mediate interaction with PRPF9 region. 190 to 197 (GPPGTGKT) is an ATP binding site. The residue at position 222 (lysine 222) is an N6-acetyllysine.

Belongs to the AAA ATPase family. Component of the 19S proteasome regulatory particle complex. The 26S proteasome consists of a 20S core particle (CP) and two 19S regulatory subunits (RP). The regulatory particle is made of a lid composed of 9 subunits, a base containing 6 ATPases including PSMC5 and few additional components. Component of a complex with USP49 and RUVBL1. Interacts with PRPF19. Interacts with TRIM5. Interacts with NDC80. Interacts with PAAF1. Interacts, in vitro, with the thyroid hormone receptor (in a thyroid hormone T3-dependent manner) and with retinoid X receptor (RXR). Interacts with ERCC6.

It localises to the cytoplasm. Its subcellular location is the nucleus. In terms of biological role, component of the 26S proteasome, a multiprotein complex involved in the ATP-dependent degradation of ubiquitinated proteins. This complex plays a key role in the maintenance of protein homeostasis by removing misfolded or damaged proteins, which could impair cellular functions, and by removing proteins whose functions are no longer required. Therefore, the proteasome participates in numerous cellular processes, including cell cycle progression, apoptosis, or DNA damage repair. PSMC5 belongs to the heterohexameric ring of AAA (ATPases associated with diverse cellular activities) proteins that unfolds ubiquitinated target proteins that are concurrently translocated into a proteolytic chamber and degraded into peptides. This Bos taurus (Bovine) protein is 26S proteasome regulatory subunit 8 (PSMC5).